Reading from the N-terminus, the 760-residue chain is Catecholate siderophore receptor Fiu (760 aa).

Positions 1–31 are cleaved as a signal peptide; sequence MENNRNFPARQFHSLTFFAGLCIGITPVAQA. In terms of domain architecture, TBDR plug spans 67 to 175; that stretch reads PVADTTRTMT…PTGSINMISK (109 aa). The TBDR beta-barrel domain occupies 180–760; sequence DSGIDASASI…TFLLTANMHF (581 aa). A TonB C-terminal box motif is present at residues 743–760; it reads RYHPGEPRTFLLTANMHF.

The protein belongs to the TonB-dependent receptor family.

It localises to the cell outer membrane. Its function is as follows. Involved in the active transport across the outer membrane of iron complexed with catecholate siderophores such as dihydroxybenzoylserine and dihydroxybenzoate. It derives its energy for transport by interacting with the trans-periplasmic membrane protein TonB. Can also transport catechol-substituted cephalosporins. Receptor for microcins M, H47 and E492. This Escherichia coli (strain UTI89 / UPEC) protein is Catecholate siderophore receptor Fiu (fiu).